We begin with the raw amino-acid sequence, 332 residues long: Adenosine deaminase (332 aa).

Zn(2+) contacts are provided by H12 and H14. The substrate site is built by H14, D16, and G170. Residue H197 coordinates Zn(2+). E200 (proton donor) is an active-site residue. D278 is a binding site for Zn(2+). Residue D279 participates in substrate binding.

This sequence belongs to the metallo-dependent hydrolases superfamily. Adenosine and AMP deaminases family. Adenosine deaminase subfamily. Zn(2+) is required as a cofactor.

It carries out the reaction adenosine + H2O + H(+) = inosine + NH4(+). It catalyses the reaction 2'-deoxyadenosine + H2O + H(+) = 2'-deoxyinosine + NH4(+). In terms of biological role, catalyzes the hydrolytic deamination of adenosine and 2-deoxyadenosine. This chain is Adenosine deaminase, found in Serratia proteamaculans (strain 568).